A 109-amino-acid polypeptide reads, in one-letter code: MTTSATVIIMVLCVGSLVIFSEGSIGFELVTPLPGKPDECPVEDGRTLAIGQTEQVPGQCEERTCIKMDDQLYFELAGCGISEAGPGCEMFESKAETYPECCTPEIKCN.

Residues 1–23 (MTTSATVIIMVLCVGSLVIFSEG) form the signal peptide.

Post-translationally, contains 4 disulfide bonds. In terms of tissue distribution, expressed by the venom gland.

It localises to the secreted. The protein is U-scoloptoxin(16)-Ssd1a of Scolopendra dehaani (Thai centipede).